A 295-amino-acid polypeptide reads, in one-letter code: Pantothenate synthetase (295 aa).

30–37 provides a ligand contact to ATP; the sequence is MGNLHDGH. The Proton donor role is filled by H37. Q61 is a (R)-pantoate binding site. Q61 is a binding site for beta-alanine. 149 to 152 contributes to the ATP binding site; sequence GEKD. Q155 is a binding site for (R)-pantoate. ATP is bound by residues V178 and 186 to 189; that span reads MSSR.

Belongs to the pantothenate synthetase family. In terms of assembly, homodimer.

It localises to the cytoplasm. It carries out the reaction (R)-pantoate + beta-alanine + ATP = (R)-pantothenate + AMP + diphosphate + H(+). It participates in cofactor biosynthesis; (R)-pantothenate biosynthesis; (R)-pantothenate from (R)-pantoate and beta-alanine: step 1/1. Catalyzes the condensation of pantoate with beta-alanine in an ATP-dependent reaction via a pantoyl-adenylate intermediate. The sequence is that of Pantothenate synthetase from Photobacterium profundum (strain SS9).